A 654-amino-acid polypeptide reads, in one-letter code: Pentatricopeptide repeat-containing protein At4g19191, mitochondrial (654 aa).

A mitochondrion-targeting transit peptide spans 1–65; it reads MSLIHRRLYR…PFVAKACARL (65 aa). PPR repeat units follow at residues 86–116, 117–151, 152–186, 187–217, 220–254, 255–289, 290–320, 321–355, 356–390, 392–422, 423–457, 458–488, and 494–524; these read DVFV…MPER, DATT…EITP, DSVT…GVDV, QVTV…IDRG, TVVS…EFKP, DLST…GTDQ, DIEA…MTSR, TCVS…GEKP, DLVT…GCKR, NVMI…TPEK, TVVT…DYKP, NHIT…MKQV, and GLDH…MSAK. The interval 529–604 is type E motif; the sequence is IWGALLNACK…YPGESVIQVN (76 aa). Residues 605 to 635 are type E(+) motif; the sequence is GKNHSFTVGEHGHVENEVIYFTLNGLSLFAK.

This sequence belongs to the PPR family. PCMP-E subfamily.

It is found in the mitochondrion. The protein is Pentatricopeptide repeat-containing protein At4g19191, mitochondrial (PCMP-E1) of Arabidopsis thaliana (Mouse-ear cress).